The primary structure comprises 154 residues: Myoglobin (154 aa).

Residues Gly2 to Lys148 enclose the Globin domain. At Ser4 the chain carries Phosphoserine. Residue His65 coordinates nitrite. His65 contacts O2. At Thr68 the chain carries Phosphothreonine. Residue His94 coordinates heme b.

The protein belongs to the globin family. As to quaternary structure, monomeric.

It is found in the cytoplasm. Its subcellular location is the sarcoplasm. It catalyses the reaction Fe(III)-heme b-[protein] + nitric oxide + H2O = Fe(II)-heme b-[protein] + nitrite + 2 H(+). The catalysed reaction is H2O2 + AH2 = A + 2 H2O. Its function is as follows. Monomeric heme protein which primary function is to store oxygen and facilitate its diffusion within muscle tissues. Reversibly binds oxygen through a pentacoordinated heme iron and enables its timely and efficient release as needed during periods of heightened demand. Depending on the oxidative conditions of tissues and cells, and in addition to its ability to bind oxygen, it also has a nitrite reductase activity whereby it regulates the production of bioactive nitric oxide. Under stress conditions, like hypoxia and anoxia, it also protects cells against reactive oxygen species thanks to its pseudoperoxidase activity. The sequence is that of Myoglobin (MB) from Orcinus orca (Killer whale).